The chain runs to 135 residues: Galectin-1 (135 aa).

N-acetylalanine is present on alanine 2. A Galectin domain is found at 4–135 (GLVASNLNLK…DFKIKCVAFE (132 aa)). Lysine 13 and lysine 29 each carry N6-acetyllysine. A Phosphoserine modification is found at serine 30. A beta-D-galactoside is bound by residues 45-49 (HFNPR), histidine 53, asparagine 62, and 69-72 (WGAE). An N6-acetyllysine; alternate modification is found at lysine 108. Lysine 108 bears the N6-succinyllysine; alternate mark. Lysine 128 carries the N6-acetyllysine modification.

In terms of assembly, homodimer. Binds LGALS3BP. Interacts with CD2, CD3, CD4, CD6, CD7, CD43, ALCAM and CD45. Interacts with laminin (via poly-N-acetyllactosamine). Interacts with SUSD2. Interacts with cargo receptor TMED10; the interaction mediates the translocation from the cytoplasm into the ERGIC (endoplasmic reticulum-Golgi intermediate compartment) and thereby secretion.

It localises to the secreted. It is found in the extracellular space. The protein resides in the extracellular matrix. Its subcellular location is the cytoplasm. In terms of biological role, lectin that binds beta-galactoside and a wide array of complex carbohydrates. Plays a role in regulating apoptosis, cell proliferation and cell differentiation. Inhibits CD45 protein phosphatase activity and therefore the dephosphorylation of Lyn kinase. Strong inducer of T-cell apoptosis. Has hemagglutinating activity towards human erythrocytes. This is Galectin-1 from Capra hircus (Goat).